A 166-amino-acid polypeptide reads, in one-letter code: Small ribosomal subunit protein uS5 (166 aa).

In terms of domain architecture, S5 DRBM spans 11-74 (LEDRVVAINR…EDAKKNLVEV (64 aa)).

This sequence belongs to the universal ribosomal protein uS5 family. Part of the 30S ribosomal subunit. Contacts proteins S4 and S8.

In terms of biological role, with S4 and S12 plays an important role in translational accuracy. Functionally, located at the back of the 30S subunit body where it stabilizes the conformation of the head with respect to the body. This chain is Small ribosomal subunit protein uS5, found in Enterococcus faecalis (strain ATCC 700802 / V583).